A 299-amino-acid polypeptide reads, in one-letter code: Mycothiol acetyltransferase (299 aa).

N-acetyltransferase domains are found at residues 1–156 and 149–299; these read MGWT…TYRG and VTMR…ARAL. Position 33 (Glu33) interacts with 1D-myo-inositol 2-(L-cysteinylamino)-2-deoxy-alpha-D-glucopyranoside. Acetyl-CoA-binding positions include 75-77 and 83-88; these read LVV and RRGIGT. Positions 176, 218, and 231 each coordinate 1D-myo-inositol 2-(L-cysteinylamino)-2-deoxy-alpha-D-glucopyranoside. Residues 235-237 and 242-248 each bind acetyl-CoA; these read VGI and QGRGLGR. Tyr269 provides a ligand contact to 1D-myo-inositol 2-(L-cysteinylamino)-2-deoxy-alpha-D-glucopyranoside. 274–279 provides a ligand contact to acetyl-CoA; it reads NTAALH.

Belongs to the acetyltransferase family. MshD subfamily. In terms of assembly, monomer.

It carries out the reaction 1D-myo-inositol 2-(L-cysteinylamino)-2-deoxy-alpha-D-glucopyranoside + acetyl-CoA = mycothiol + CoA + H(+). Its function is as follows. Catalyzes the transfer of acetyl from acetyl-CoA to desacetylmycothiol (Cys-GlcN-Ins) to form mycothiol. This is Mycothiol acetyltransferase from Rhodococcus erythropolis (strain PR4 / NBRC 100887).